The sequence spans 322 residues: Atrochrysone carboxyl ACP thioesterase dmxR1 (322 aa).

Zn(2+)-binding residues include H105, H107, D109, and H110. Catalysis depends on D109, which acts as the Proton donor/acceptor.

This sequence belongs to the metallo-beta-lactamase superfamily. Requires Zn(2+) as cofactor.

It catalyses the reaction atrochrysone carboxyl-[ACP] + H2O = atrochrysone carboxylate + holo-[ACP] + H(+). Its pathway is secondary metabolite biosynthesis. Functionally, atrochrysone carboxyl ACP thioesterase; part of the gene cluster that mediates the biosynthesis of the dimeric xanthones cryptosporioptides. The pathway begins with the synthesis of atrochrysone thioester by the polyketide synthase dmx-nrPKS. The atrochrysone carboxyl ACP thioesterase dmxR1 then breaks the thioester bond and releases the atrochrysone carboxylic acid from dmx-nrPKS. Atrochrysone carboxylic acid is decarboxylated by the decarboxylase dmxR15, and oxidized by the anthrone oxygenase dmxR16 to yield emodin. Emodin is then reduced to emodin hydroquinone by the oxidoreductase dmxR7. A-ring reduction by the short chain dehydrogenase dmxR18, dehydration by the scytalone dehydratase-like protein dmxR17 and probable spontaneous re-oxidation, results in overall deoxygenation to chrysophanol. Baeyer-Villiger oxidation by the Baeyer-Villiger monooxygenase (BVMO) dmxR6 then yields monodictylactone in equilibrium with monodictyphenone. In the case of the cryptosporioptides biosynthesis, monodictylactone is reduced at C-12 to an alcohol (by the short chain dehydrogenases dmxR12 or dmxR8) and hydroxylated at C-5 by dmxR9, yielding the electron-rich aromatic which could eliminate H(2)O to form the ortho-quinonemethide, followed by tautomerisation to paraquinone and complete the formal reduction to produce the 10-methylgroup. Conjugate addition of C-4a-OH to the resulting paraquinone by the monooxygenase dmxR10 then gives cyclohexadienone, which is then reduced at C-5 by the short chain dehydrogenase dmxR3 to give the dihydroxanthone. The 6,7-epoxide in the cryptosporioptides could be introduced by the cytochrome P450 monooxygenase dmxL3. The highly reducing PKS dmxL2 manufactures butyrate, which is further carboxylated by dmxL1 to form ethylmalonate. It is not yet clear whether the carboxylation occurs while the butyrate is attached to the ACP of dmxL2, but this unusual fungal metabolite could then be esterified to O-5 by the O-acetyltransferase dmxR13. Finally, dimerization performed by dmxR5 gives the observed dimers cryptosporioptides A, B and C as the final products of the pathway. This chain is Atrochrysone carboxyl ACP thioesterase dmxR1, found in Cryptosporiopsis sp. (strain 8999).